A 239-amino-acid chain; its full sequence is Cysteine-rich venom protein (239 aa).

The first 18 residues, 1-18 (MIVFILLSLAAVLQQSVA), serve as a signal peptide directing secretion. An SCP domain is found at 37-165 (VDMHNSFRRS…PYNYFYVCQY (129 aa)). 7 disulfides stabilise this stretch: Cys-74–Cys-152, Cys-91–Cys-166, Cys-147–Cys-163, Cys-185–Cys-192, Cys-188–Cys-197, Cys-210–Cys-228, and Cys-219–Cys-232. Residues 201–234 (CPINNVFTNCDSLLQQSSCEDSYITTNCGASCFC) enclose the ShKT domain.

Belongs to the CRISP family. As to expression, expressed by the venom gland.

The protein localises to the secreted. Functionally, blocks contraction of smooth muscle elicited by high potassium-induced depolarization, but does not block caffeine-stimulated contraction. May target voltage-gated calcium channels on smooth muscle. The chain is Cysteine-rich venom protein from Cerberus rynchops (Dog-faced water snake).